The following is a 199-amino-acid chain: Small ribosomal subunit protein eS1 (199 aa).

The protein belongs to the eukaryotic ribosomal protein eS1 family.

This Pyrococcus abyssi (strain GE5 / Orsay) protein is Small ribosomal subunit protein eS1.